The chain runs to 354 residues: UPF0283 membrane protein Meso_1416 (354 aa).

Residues 1–28 (MSEPRRPAAFRIEPAPSPSPEATREDVR) are disordered. Helical transmembrane passes span 71-91 (LGAV…GLWA) and 105-125 (LGWL…AIVV).

It belongs to the UPF0283 family.

It is found in the cell inner membrane. The protein is UPF0283 membrane protein Meso_1416 of Chelativorans sp. (strain BNC1).